The primary structure comprises 249 residues: tRNA pseudouridine synthase A (249 aa).

The Nucleophile role is filled by aspartate 53. A substrate-binding site is contributed by tyrosine 111.

The protein belongs to the tRNA pseudouridine synthase TruA family. Homodimer.

The catalysed reaction is uridine(38/39/40) in tRNA = pseudouridine(38/39/40) in tRNA. Its function is as follows. Formation of pseudouridine at positions 38, 39 and 40 in the anticodon stem and loop of transfer RNAs. The chain is tRNA pseudouridine synthase A from Streptococcus pneumoniae serotype 19F (strain G54).